The chain runs to 333 residues: Holliday junction branch migration complex subunit RuvB (333 aa).

The large ATPase domain (RuvB-L) stretch occupies residues 1-182 (MDERLLSGES…FGVLSRLEYY (182 aa)). Residues L21, R22, G63, K66, T67, T68, 129–131 (EDF), R172, Y182, and R219 each bind ATP. T67 serves as a coordination point for Mg(2+). The tract at residues 183–253 (TVDQLSAIVE…ITQMALELLQ (71 aa)) is small ATPAse domain (RuvB-S). Residues 256–333 (KLGLDHIDHK…EHFGMEMPKV (78 aa)) are head domain (RuvB-H). DNA-binding residues include R311 and R316.

It belongs to the RuvB family. In terms of assembly, homohexamer. Forms an RuvA(8)-RuvB(12)-Holliday junction (HJ) complex. HJ DNA is sandwiched between 2 RuvA tetramers; dsDNA enters through RuvA and exits via RuvB. An RuvB hexamer assembles on each DNA strand where it exits the tetramer. Each RuvB hexamer is contacted by two RuvA subunits (via domain III) on 2 adjacent RuvB subunits; this complex drives branch migration. In the full resolvosome a probable DNA-RuvA(4)-RuvB(12)-RuvC(2) complex forms which resolves the HJ.

The protein resides in the cytoplasm. The catalysed reaction is ATP + H2O = ADP + phosphate + H(+). Functionally, the RuvA-RuvB-RuvC complex processes Holliday junction (HJ) DNA during genetic recombination and DNA repair, while the RuvA-RuvB complex plays an important role in the rescue of blocked DNA replication forks via replication fork reversal (RFR). RuvA specifically binds to HJ cruciform DNA, conferring on it an open structure. The RuvB hexamer acts as an ATP-dependent pump, pulling dsDNA into and through the RuvAB complex. RuvB forms 2 homohexamers on either side of HJ DNA bound by 1 or 2 RuvA tetramers; 4 subunits per hexamer contact DNA at a time. Coordinated motions by a converter formed by DNA-disengaged RuvB subunits stimulates ATP hydrolysis and nucleotide exchange. Immobilization of the converter enables RuvB to convert the ATP-contained energy into a lever motion, pulling 2 nucleotides of DNA out of the RuvA tetramer per ATP hydrolyzed, thus driving DNA branch migration. The RuvB motors rotate together with the DNA substrate, which together with the progressing nucleotide cycle form the mechanistic basis for DNA recombination by continuous HJ branch migration. Branch migration allows RuvC to scan DNA until it finds its consensus sequence, where it cleaves and resolves cruciform DNA. The sequence is that of Holliday junction branch migration complex subunit RuvB from Bacillus cereus (strain Q1).